The following is a 227-amino-acid chain: Phosphoribosylformylglycinamidine synthase subunit PurQ (227 aa).

The Glutamine amidotransferase type-1 domain occupies 3 to 225 (FAVIVFPGSN…LKQWRETYVV (223 aa)). Cysteine 86 acts as the Nucleophile in catalysis. Residues histidine 194 and glutamate 196 contribute to the active site.

Part of the FGAM synthase complex composed of 1 PurL, 1 PurQ and 2 PurS subunits.

It is found in the cytoplasm. The enzyme catalyses N(2)-formyl-N(1)-(5-phospho-beta-D-ribosyl)glycinamide + L-glutamine + ATP + H2O = 2-formamido-N(1)-(5-O-phospho-beta-D-ribosyl)acetamidine + L-glutamate + ADP + phosphate + H(+). It carries out the reaction L-glutamine + H2O = L-glutamate + NH4(+). The protein operates within purine metabolism; IMP biosynthesis via de novo pathway; 5-amino-1-(5-phospho-D-ribosyl)imidazole from N(2)-formyl-N(1)-(5-phospho-D-ribosyl)glycinamide: step 1/2. Functionally, part of the phosphoribosylformylglycinamidine synthase complex involved in the purines biosynthetic pathway. Catalyzes the ATP-dependent conversion of formylglycinamide ribonucleotide (FGAR) and glutamine to yield formylglycinamidine ribonucleotide (FGAM) and glutamate. The FGAM synthase complex is composed of three subunits. PurQ produces an ammonia molecule by converting glutamine to glutamate. PurL transfers the ammonia molecule to FGAR to form FGAM in an ATP-dependent manner. PurS interacts with PurQ and PurL and is thought to assist in the transfer of the ammonia molecule from PurQ to PurL. The protein is Phosphoribosylformylglycinamidine synthase subunit PurQ of Bacillus cereus (strain 03BB102).